The following is a 160-amino-acid chain: Large ribosomal subunit protein uL16 (160 aa).

The disordered stretch occupies residues 138–160 (KNLEAPSQEKTKNSKKSQEEVKQ).

Belongs to the universal ribosomal protein uL16 family. As to quaternary structure, part of the 50S ribosomal subunit.

Functionally, binds 23S rRNA and is also seen to make contacts with the A and possibly P site tRNAs. This Prochlorococcus marinus (strain MIT 9215) protein is Large ribosomal subunit protein uL16.